The chain runs to 542 residues: CTP synthase (542 aa).

The amidoligase domain stretch occupies residues 1–265 (MARYVFITGG…DSEVLCAFGI (265 aa)). Residue serine 13 participates in CTP binding. Serine 13 serves as a coordination point for UTP. Residue 14–19 (SLGKGI) coordinates ATP. Residue tyrosine 54 participates in L-glutamine binding. Aspartate 71 contributes to the ATP binding site. Residues aspartate 71 and glutamate 139 each contribute to the Mg(2+) site. Residues 146 to 148 (DIE), 186 to 191 (KTKPTQ), and lysine 222 contribute to the CTP site. Residues 186-191 (KTKPTQ) and lysine 222 each bind UTP. The region spanning 291–541 (TIAVVGKYTG…IEAAVEQSRL (251 aa)) is the Glutamine amidotransferase type-1 domain. Alanine 353 provides a ligand contact to L-glutamine. Residue cysteine 380 is the Nucleophile; for glutamine hydrolysis of the active site. Residues 381-384 (FGMQ), glutamate 404, and arginine 469 each bind L-glutamine. Residues histidine 514 and glutamate 516 contribute to the active site.

This sequence belongs to the CTP synthase family. Homotetramer.

The enzyme catalyses UTP + L-glutamine + ATP + H2O = CTP + L-glutamate + ADP + phosphate + 2 H(+). It carries out the reaction L-glutamine + H2O = L-glutamate + NH4(+). The catalysed reaction is UTP + NH4(+) + ATP = CTP + ADP + phosphate + 2 H(+). The protein operates within pyrimidine metabolism; CTP biosynthesis via de novo pathway; CTP from UDP: step 2/2. Its activity is regulated as follows. Allosterically activated by GTP, when glutamine is the substrate; GTP has no effect on the reaction when ammonia is the substrate. The allosteric effector GTP functions by stabilizing the protein conformation that binds the tetrahedral intermediate(s) formed during glutamine hydrolysis. Inhibited by the product CTP, via allosteric rather than competitive inhibition. In terms of biological role, catalyzes the ATP-dependent amination of UTP to CTP with either L-glutamine or ammonia as the source of nitrogen. Regulates intracellular CTP levels through interactions with the four ribonucleotide triphosphates. This chain is CTP synthase, found in Bartonella tribocorum (strain CIP 105476 / IBS 506).